A 476-amino-acid polypeptide reads, in one-letter code: Bifunctional protein HldE (476 aa).

Residues 1 to 319 (MKVSLPAFEK…EALALHHGES (319 aa)) are ribokinase. 195-198 (NMSE) contributes to the ATP binding site. Asp-264 is an active-site residue. A cytidylyltransferase region spans residues 345–476 (MTNGCFDILH…AIIQNIMANQ (132 aa)).

It in the N-terminal section; belongs to the carbohydrate kinase PfkB family. The protein in the C-terminal section; belongs to the cytidylyltransferase family. In terms of assembly, homodimer.

The enzyme catalyses D-glycero-beta-D-manno-heptose 7-phosphate + ATP = D-glycero-beta-D-manno-heptose 1,7-bisphosphate + ADP + H(+). It catalyses the reaction D-glycero-beta-D-manno-heptose 1-phosphate + ATP + H(+) = ADP-D-glycero-beta-D-manno-heptose + diphosphate. It participates in nucleotide-sugar biosynthesis; ADP-L-glycero-beta-D-manno-heptose biosynthesis; ADP-L-glycero-beta-D-manno-heptose from D-glycero-beta-D-manno-heptose 7-phosphate: step 1/4. It functions in the pathway nucleotide-sugar biosynthesis; ADP-L-glycero-beta-D-manno-heptose biosynthesis; ADP-L-glycero-beta-D-manno-heptose from D-glycero-beta-D-manno-heptose 7-phosphate: step 3/4. Catalyzes the phosphorylation of D-glycero-D-manno-heptose 7-phosphate at the C-1 position to selectively form D-glycero-beta-D-manno-heptose-1,7-bisphosphate. Functionally, catalyzes the ADP transfer from ATP to D-glycero-beta-D-manno-heptose 1-phosphate, yielding ADP-D-glycero-beta-D-manno-heptose. The protein is Bifunctional protein HldE of Shewanella putrefaciens (strain CN-32 / ATCC BAA-453).